A 415-amino-acid chain; its full sequence is Mitogen-activated protein kinase mpkC (415 aa).

In terms of domain architecture, Protein kinase spans 20–299 (YANLQPVGLG…AEQGLMHPWM (280 aa)). ATP-binding positions include 26–34 (VGLGTAGVV) and Lys-49. The Proton acceptor role is filled by Asp-141. Thr-171 carries the phosphothreonine modification. Residues 171–173 (TGY) carry the TXY motif. Residue Tyr-173 is modified to Phosphotyrosine.

It belongs to the protein kinase superfamily. Ser/Thr protein kinase family. MAP kinase subfamily. HOG1 sub-subfamily. Mg(2+) serves as cofactor. In terms of processing, dually phosphorylated on Thr-171 and Tyr-173, which activates the enzyme.

It carries out the reaction L-seryl-[protein] + ATP = O-phospho-L-seryl-[protein] + ADP + H(+). It catalyses the reaction L-threonyl-[protein] + ATP = O-phospho-L-threonyl-[protein] + ADP + H(+). Its activity is regulated as follows. Activated by tyrosine and threonine phosphorylation. In terms of biological role, mitogen-activated protein kinase required for growth on media where sorbitol or mannitol is the sole carbon source. The protein is Mitogen-activated protein kinase mpkC (mpkC) of Emericella nidulans (strain FGSC A4 / ATCC 38163 / CBS 112.46 / NRRL 194 / M139) (Aspergillus nidulans).